A 147-amino-acid chain; its full sequence is Hemoglobin subunit epsilon-M (147 aa).

In terms of domain architecture, Globin spans 3–147; it reads HFTPEDKTNI…VSSALGHKYH (145 aa). A phosphoserine mark is found at Ser14 and Ser51. Residues His64 and His93 each contribute to the heme b site.

Belongs to the globin family. In terms of tissue distribution, red blood cells.

In terms of biological role, hemoglobin epsilon chain is a beta-type chain found in early embryos. In Didelphis virginiana (North American opossum), this protein is Hemoglobin subunit epsilon-M (HBE1).